The following is an 861-amino-acid chain: Leucine--tRNA ligase (861 aa).

Residues 42-52 carry the 'HIGH' region motif; sequence PYPSGRLHMGH. The 'KMSKS' region motif lies at 619–623; the sequence is KMSKS. Lys622 provides a ligand contact to ATP.

This sequence belongs to the class-I aminoacyl-tRNA synthetase family.

It is found in the cytoplasm. The enzyme catalyses tRNA(Leu) + L-leucine + ATP = L-leucyl-tRNA(Leu) + AMP + diphosphate. This Haemophilus influenzae (strain 86-028NP) protein is Leucine--tRNA ligase.